Here is a 943-residue protein sequence, read N- to C-terminus: Isoleucine--tRNA ligase (943 aa).

The 'HIGH' region motif lies at 58–68 (PYANGKIHIGH). Glu567 is an L-isoleucyl-5'-AMP binding site. The 'KMSKS' region signature appears at 608 to 612 (KMSKS). Lys611 is an ATP binding site. Zn(2+) contacts are provided by Cys906, Cys909, Cys926, and Cys929.

This sequence belongs to the class-I aminoacyl-tRNA synthetase family. IleS type 1 subfamily. In terms of assembly, monomer. Zn(2+) serves as cofactor.

The protein resides in the cytoplasm. The catalysed reaction is tRNA(Ile) + L-isoleucine + ATP = L-isoleucyl-tRNA(Ile) + AMP + diphosphate. Catalyzes the attachment of isoleucine to tRNA(Ile). As IleRS can inadvertently accommodate and process structurally similar amino acids such as valine, to avoid such errors it has two additional distinct tRNA(Ile)-dependent editing activities. One activity is designated as 'pretransfer' editing and involves the hydrolysis of activated Val-AMP. The other activity is designated 'posttransfer' editing and involves deacylation of mischarged Val-tRNA(Ile). The chain is Isoleucine--tRNA ligase from Pseudomonas putida (strain ATCC 47054 / DSM 6125 / CFBP 8728 / NCIMB 11950 / KT2440).